A 264-amino-acid polypeptide reads, in one-letter code: Phosphatidylglycerol--prolipoprotein diacylglyceryl transferase (264 aa).

Helical transmembrane passes span Leu-17 to Ala-37, Leu-59 to Tyr-79, and Trp-95 to Phe-115. Arg-142 serves as a coordination point for a 1,2-diacyl-sn-glycero-3-phospho-(1'-sn-glycerol). Transmembrane regions (helical) follow at residues Gly-205 to Phe-225 and Met-241 to Gly-261.

Belongs to the Lgt family.

Its subcellular location is the cell inner membrane. It carries out the reaction L-cysteinyl-[prolipoprotein] + a 1,2-diacyl-sn-glycero-3-phospho-(1'-sn-glycerol) = an S-1,2-diacyl-sn-glyceryl-L-cysteinyl-[prolipoprotein] + sn-glycerol 1-phosphate + H(+). Its pathway is protein modification; lipoprotein biosynthesis (diacylglyceryl transfer). Functionally, catalyzes the transfer of the diacylglyceryl group from phosphatidylglycerol to the sulfhydryl group of the N-terminal cysteine of a prolipoprotein, the first step in the formation of mature lipoproteins. This chain is Phosphatidylglycerol--prolipoprotein diacylglyceryl transferase, found in Methylibium petroleiphilum (strain ATCC BAA-1232 / LMG 22953 / PM1).